The primary structure comprises 164 residues: HTH-type transcriptional regulator IscR (164 aa).

Residues 2-131 (RLTSKGRYAV…NNITLDELVN (130 aa)) enclose the HTH rrf2-type domain. A DNA-binding region (H-T-H motif) is located at residues 28 to 51 (LADISERQGISLSYLEQLFSRLRK). Cys92, Cys98, and Cys104 together coordinate [2Fe-2S] cluster.

The cofactor is [2Fe-2S] cluster.

In terms of biological role, regulates the transcription of several operons and genes involved in the biogenesis of Fe-S clusters and Fe-S-containing proteins. In Pectobacterium atrosepticum (strain SCRI 1043 / ATCC BAA-672) (Erwinia carotovora subsp. atroseptica), this protein is HTH-type transcriptional regulator IscR.